We begin with the raw amino-acid sequence, 461 residues long: tRNA modification GTPase MnmE (461 aa).

(6S)-5-formyl-5,6,7,8-tetrahydrofolate-binding residues include Arg22, Glu87, and Arg126. The TrmE-type G domain occupies 222-382; the sequence is GLKTVIVGKP…LEETIFNMVV (161 aa). A K(+)-binding site is contributed by Asn232. Residues 232–237, 251–257, and 276–279 each bind GTP; these read NVGKSS, TDIPGTT, and DTAG. Ser236 contacts Mg(2+). Residues Thr251, Ile253, and Thr256 each coordinate K(+). A Mg(2+)-binding site is contributed by Thr257. Residue Lys461 participates in (6S)-5-formyl-5,6,7,8-tetrahydrofolate binding.

The protein belongs to the TRAFAC class TrmE-Era-EngA-EngB-Septin-like GTPase superfamily. TrmE GTPase family. As to quaternary structure, homodimer. Heterotetramer of two MnmE and two MnmG subunits. Requires K(+) as cofactor.

The protein resides in the cytoplasm. Functionally, exhibits a very high intrinsic GTPase hydrolysis rate. Involved in the addition of a carboxymethylaminomethyl (cmnm) group at the wobble position (U34) of certain tRNAs, forming tRNA-cmnm(5)s(2)U34. The sequence is that of tRNA modification GTPase MnmE from Desulforamulus reducens (strain ATCC BAA-1160 / DSM 100696 / MI-1) (Desulfotomaculum reducens).